The sequence spans 747 residues: Polyribonucleotide nucleotidyltransferase (747 aa).

Mg(2+) is bound by residues aspartate 487 and aspartate 493. The 60-residue stretch at 554 to 613 folds into the KH domain; it reads PSTTTIKIDKDKIRDIIGPGGKIIKEICETSGAKIDISDDGTVSVYAADRDKLKIASDKI. The region spanning 623-691 is the S1 motif domain; that stretch reads GEIFNGTVTK…NKGKAKLTIK (69 aa). A disordered region spans residues 694–716; that stretch reads DKDKSLNNPKPQNSINNAKENSE. Residues 699 to 712 are compositionally biased toward polar residues; that stretch reads LNNPKPQNSINNAK.

This sequence belongs to the polyribonucleotide nucleotidyltransferase family. Mg(2+) is required as a cofactor.

It is found in the cytoplasm. The catalysed reaction is RNA(n+1) + phosphate = RNA(n) + a ribonucleoside 5'-diphosphate. In terms of biological role, involved in mRNA degradation. Catalyzes the phosphorolysis of single-stranded polyribonucleotides processively in the 3'- to 5'-direction. The protein is Polyribonucleotide nucleotidyltransferase of Rickettsia canadensis (strain McKiel).